The primary structure comprises 238 residues: Protein lifeguard 4 (238 aa).

Topologically, residues 1-38 (MADTDPGYPRSSIEDDFNYGSCVASASVHIRMAFLRKV) are cytoplasmic. Residues 39 to 59 (YSILSLQVLLTTVTSALFLYF) form a helical membrane-spanning segment. The Lumenal portion of the chain corresponds to 60-68 (QALRTFVHE). The helical transmembrane segment at 69-89 (SPALIVVFALGSLGLIFALTL) threads the bilayer. At 90–97 (HRHTHPLN) the chain is on the cytoplasmic side. A helical membrane pass occupies residues 98-118 (LYLLFAFTLSESLAVAAVVTF). The Lumenal segment spans residues 119 to 120 (YD). Residues 121 to 141 (VYLVLQAFIMTTAVFLGLTAY) traverse the membrane as a helical segment. Residues 142–151 (TLQSKRDFTK) lie on the Cytoplasmic side of the membrane. The helical transmembrane segment at 152–172 (FGAGLFAGLWILCLAGFLKLF) threads the bilayer. At 173–175 (FYS) the chain is on the lumenal side. The helical transmembrane segment at 176 to 196 (ETMELVLASLGALLFCGFIIY) threads the bilayer. Topologically, residues 197-208 (DTHSLMHRLSPE) are cytoplasmic. An intramembrane region (helical) is located at residues 209 to 229 (EYVIAAISLYMDIINLFLHLL). At 230 to 238 (KFLEAVNKK) the chain is on the cytoplasmic side.

This sequence belongs to the BI1 family. LFG subfamily. As to quaternary structure, interacts with ITPR3.

It is found in the golgi apparatus membrane. Anti-apoptotic protein which can inhibit apoptosis induced by intrinsic and extrinsic apoptotic stimuli. Can modulate both capacitative Ca2+ entry and inositol 1,4,5-trisphosphate (IP3)-mediated Ca2+ release. In Mus musculus (Mouse), this protein is Protein lifeguard 4 (Tmbim4).